Here is a 451-residue protein sequence, read N- to C-terminus: Phenolic glucoside malonyltransferase 2 (451 aa).

Residue His-165 is the Proton acceptor of the active site. The HXXXD motif motif lies at 165 to 169 (HAVLD). Residues His-270 and 272 to 273 (ST) contribute to the malonyl-CoA site. The active-site Proton acceptor is the Asp-395. Positions 395–399 (DFGWG) match the DFGWG motif motif.

This sequence belongs to the plant acyltransferase family. Phenolic glucoside malonyltransferase subfamily.

The catalysed reaction is a flavonol 7-O-beta-D-glucoside + malonyl-CoA = a flavonol 7-O-(6-O-malonyl-beta-D-glucoside) + CoA. Malonyltransferase acting on xenobiotic glucosides. Has activity toward 2-Naphthol glucoside (2NAG), 1-Naphthol glucoside (1NAG), kaempferol 7-O-glucoside, hydroxycoumarin glucosides and phenol-glucosides, but not toward kaempferol 3-O-glucoside or daidzin. Prefers phenol glucosides rather than naphtol glucosides. In vivo, seems to be involved in the malonylation of 4-methylumbelliferone glucoside or 4-nitrophenyl glucoside while PMAT1 would be involved in the malonylation of 2-Naphthol glucoside. This Arabidopsis thaliana (Mouse-ear cress) protein is Phenolic glucoside malonyltransferase 2 (PMAT2).